A 1500-amino-acid polypeptide reads, in one-letter code: Secreted chitinase LysM12 (1500 aa).

Positions 1-23 (MAPLWNGMAAGLLLSAAVVSGQA) are cleaved as a signal peptide. Residues N53, N225, N251, and N270 are each glycosylated (N-linked (GlcNAc...) asparagine). 2 consecutive LysM domains span residues 303–348 (RTQK…HVCC) and 367–415 (ATTT…VICI). Residues 428-496 (DAECGPQVPG…TNGCISHCGM (69 aa)) enclose the Chitin-binding type-1 domain. 4 disulfides stabilise this stretch: C431–C459, C453–C465, C458–C472, and C490–C494. One can recognise a GH18 domain in the interval 507–879 (FRSVGYYESY…PGMILQMKSG (373 aa)). E625 serves as the catalytic Proton donor. Position 626 (Y626) interacts with chitin. N721 and N800 each carry an N-linked (GlcNAc...) asparagine glycan. A chitin-binding site is contributed by W852. N892 and N983 each carry an N-linked (GlcNAc...) asparagine glycan. The segment at 1164 to 1193 (IPKDIPYPDKTKRKDKDDDDNKKTEATDSE) is disordered. Residues 1169–1193 (PYPDKTKRKDKDDDDNKKTEATDSE) show a composition bias toward basic and acidic residues.

The protein belongs to the glycosyl hydrolase 18 family. Chitinase class V subfamily.

Its subcellular location is the secreted. It carries out the reaction Random endo-hydrolysis of N-acetyl-beta-D-glucosaminide (1-&gt;4)-beta-linkages in chitin and chitodextrins.. Secreted chitinase involved in the degradation of chitin, a component of the cell walls of fungi and exoskeletal elements of some animals (including worms and arthropods). Involved in pathogenesis via manipulation of host defenses for successful infection. In Penicillium expansum (Blue mold rot fungus), this protein is Secreted chitinase LysM12.